A 337-amino-acid polypeptide reads, in one-letter code: Ketol-acid reductoisomerase (NADP(+)) (337 aa).

The KARI N-terminal Rossmann domain occupies 1–180 (MQVYYDKDAD…GGTKGGVIET (180 aa)). Residues 24–27 (YGSQ), Arg47, and Ser51 contribute to the NADP(+) site. Residue His106 is part of the active site. Residue Gly132 coordinates NADP(+). Positions 181–326 (TFREETETDL…ARLRAMMPWI (146 aa)) constitute a KARI C-terminal knotted domain. Positions 189, 193, 225, and 229 each coordinate Mg(2+). Ser250 serves as a coordination point for substrate.

The protein belongs to the ketol-acid reductoisomerase family. It depends on Mg(2+) as a cofactor.

The enzyme catalyses (2R)-2,3-dihydroxy-3-methylbutanoate + NADP(+) = (2S)-2-acetolactate + NADPH + H(+). It carries out the reaction (2R,3R)-2,3-dihydroxy-3-methylpentanoate + NADP(+) = (S)-2-ethyl-2-hydroxy-3-oxobutanoate + NADPH + H(+). The protein operates within amino-acid biosynthesis; L-isoleucine biosynthesis; L-isoleucine from 2-oxobutanoate: step 2/4. Its pathway is amino-acid biosynthesis; L-valine biosynthesis; L-valine from pyruvate: step 2/4. Functionally, involved in the biosynthesis of branched-chain amino acids (BCAA). Catalyzes an alkyl-migration followed by a ketol-acid reduction of (S)-2-acetolactate (S2AL) to yield (R)-2,3-dihydroxy-isovalerate. In the isomerase reaction, S2AL is rearranged via a Mg-dependent methyl migration to produce 3-hydroxy-3-methyl-2-ketobutyrate (HMKB). In the reductase reaction, this 2-ketoacid undergoes a metal-dependent reduction by NADPH to yield (R)-2,3-dihydroxy-isovalerate. The chain is Ketol-acid reductoisomerase (NADP(+)) from Neisseria gonorrhoeae (strain ATCC 700825 / FA 1090).